The primary structure comprises 96 residues: Ribonuclease P protein component 1 (96 aa).

The protein belongs to the eukaryotic/archaeal RNase P protein component 1 family. In terms of assembly, consists of a catalytic RNA component and at least 5 protein subunits.

It is found in the cytoplasm. It catalyses the reaction Endonucleolytic cleavage of RNA, removing 5'-extranucleotides from tRNA precursor.. Functionally, part of ribonuclease P, a protein complex that generates mature tRNA molecules by cleaving their 5'-ends. This Methanococcus maripaludis (strain DSM 14266 / JCM 13030 / NBRC 101832 / S2 / LL) protein is Ribonuclease P protein component 1.